A 138-amino-acid polypeptide reads, in one-letter code: ATP synthase epsilon chain (138 aa).

The protein belongs to the ATPase epsilon chain family. F-type ATPases have 2 components, CF(1) - the catalytic core - and CF(0) - the membrane proton channel. CF(1) has five subunits: alpha(3), beta(3), gamma(1), delta(1), epsilon(1). CF(0) has three main subunits: a, b and c.

The protein resides in the cell inner membrane. Produces ATP from ADP in the presence of a proton gradient across the membrane. In Geobacter metallireducens (strain ATCC 53774 / DSM 7210 / GS-15), this protein is ATP synthase epsilon chain.